A 175-amino-acid polypeptide reads, in one-letter code: uncharacterized protein (175 aa).

The DNL-type zinc-finger motif lies at 71–166 (QPKPTYNVSF…KPPQFKIRPA (96 aa)). Residues Cys-82, Cys-85, Cys-107, and Cys-110 each contribute to the Zn(2+) site.

This is an uncharacterized protein from Schizosaccharomyces pombe (strain 972 / ATCC 24843) (Fission yeast).